Consider the following 612-residue polypeptide: UvrABC system protein C (612 aa).

A GIY-YIG domain is found at 20 to 98 (THSGVYRMLD…IKQHRPKYNI (79 aa)). The 36-residue stretch at 208 to 243 (SSVLEEISAKMYQASEDMEYEKAQVYRDQLVVLRKL) folds into the UVR domain.

This sequence belongs to the UvrC family. Interacts with UvrB in an incision complex.

The protein localises to the cytoplasm. In terms of biological role, the UvrABC repair system catalyzes the recognition and processing of DNA lesions. UvrC both incises the 5' and 3' sides of the lesion. The N-terminal half is responsible for the 3' incision and the C-terminal half is responsible for the 5' incision. This chain is UvrABC system protein C, found in Francisella tularensis subsp. mediasiatica (strain FSC147).